A 1025-amino-acid chain; its full sequence is Multidrug resistance protein MdtC (1025 aa).

12 helical membrane-spanning segments follow: residues 3–23 (FFALFIYRPVATILLSVAITL), 333–353 (EVEQTLIISVALVILVVFLFL), 360–380 (IIPAVSVPVSLIGTFAAMYLC), 387–407 (LSLMALTIATGFVVDDAIVVL), 431–451 (VGFTVLSMSLSLVAVFLPLLL), 463–483 (FAVTLSVAIGISLLVSLTLTP), 528–548 (LVGVVLLGTIALNIWLYISIP), 853–873 (VILIIAAIATVYIVLGILYES), 875–895 (VHPLTILSTLPSAGVGALLAL), 897–917 (LFNAPFSLIALIGIMLLIGIV), 953–973 (PIMMTTLAALFGALPLVLSGG), and 984–1004 (ITIVGGLVMSQLLTLYTTPVV).

This sequence belongs to the resistance-nodulation-cell division (RND) (TC 2.A.6) family. MdtC subfamily. In terms of assembly, part of a tripartite efflux system composed of MdtA, MdtB and MdtC. MdtC forms a heteromultimer with MdtB.

It localises to the cell inner membrane. The MdtABC tripartite complex confers resistance against novobiocin and deoxycholate. This Escherichia coli (strain K12 / MC4100 / BW2952) protein is Multidrug resistance protein MdtC.